The following is a 314-amino-acid chain: Ribosomal RNA small subunit methyltransferase H (314 aa).

Residues 36–38 (GGH), Asp56, Phe83, Asp104, and Gln111 contribute to the S-adenosyl-L-methionine site.

Belongs to the methyltransferase superfamily. RsmH family.

The protein localises to the cytoplasm. The catalysed reaction is cytidine(1402) in 16S rRNA + S-adenosyl-L-methionine = N(4)-methylcytidine(1402) in 16S rRNA + S-adenosyl-L-homocysteine + H(+). Specifically methylates the N4 position of cytidine in position 1402 (C1402) of 16S rRNA. The chain is Ribosomal RNA small subunit methyltransferase H from Syntrophotalea carbinolica (strain DSM 2380 / NBRC 103641 / GraBd1) (Pelobacter carbinolicus).